Reading from the N-terminus, the 393-residue chain is MSLSLKRKDLMIVNMGPQHPSMHGVLRLIVTLDGEDVIDCEPILGYLHRGMEKIAENRSIIQYLPYVTRWDYLATMFTEAITVNAPEFLENIQIPQRASYIRVIMLELSRIASHLLWLGPFMADLGAQTPFFYIFRERELIYDLFEAATGMRMMHNYFRIGGVAADLPYGWMDKCLDFCDYFLQGVVEYQQLITRNPIFLERVEGVGFISGEEAVNWGLSGPMLRASGIQWDLRKIDPYESYNQFDWKVQWQKEGDSLARYLVRVGEMRESIKIIQQAVEKIPGGPYENLEARRFKKAKNPEWNDFEYRFLGKKPSPNFELSKQELYVRVEAPKGELGIYLVGDDSLFPWRWKIRPPGFINLQILPQLVKKMKLADIMTILGSIDIIMGEVDR.

The protein belongs to the complex I 49 kDa subunit family. NDH is composed of at least 16 different subunits, 5 of which are encoded in the nucleus.

It is found in the plastid. Its subcellular location is the chloroplast thylakoid membrane. It carries out the reaction a plastoquinone + NADH + (n+1) H(+)(in) = a plastoquinol + NAD(+) + n H(+)(out). The enzyme catalyses a plastoquinone + NADPH + (n+1) H(+)(in) = a plastoquinol + NADP(+) + n H(+)(out). Functionally, NDH shuttles electrons from NAD(P)H:plastoquinone, via FMN and iron-sulfur (Fe-S) centers, to quinones in the photosynthetic chain and possibly in a chloroplast respiratory chain. The immediate electron acceptor for the enzyme in this species is believed to be plastoquinone. Couples the redox reaction to proton translocation, and thus conserves the redox energy in a proton gradient. This chain is NAD(P)H-quinone oxidoreductase subunit H, chloroplastic, found in Sorghum bicolor (Sorghum).